Here is a 628-residue protein sequence, read N- to C-terminus: WW domain-containing adapter protein with coiled-coil (628 aa).

Disordered regions lie at residues 1–130 (MVMY…DDWS), 152–338 (EKPK…PQSP), and 417–532 (NQSP…SARS). A compositionally biased stretch (basic and acidic residues) spans 37–49 (SSDHRHDKMRDST). Basic residues predominate over residues 74-84 (GKAKSMHLHRV). The segment covering 101 to 121 (NHSAIHSSNSHSSTPSKTSDS) has biased composition (low complexity). Residues 123–156 (YDPADDWSEHISSSGKKYYYNCRTEVSQWEKPKE) form the WW domain. Composition is skewed to basic and acidic residues over residues 152-168 (EKPK…KETS) and 176-185 (PKDRDYRREA). The segment covering 199-213 (DTSTMLPQNILSQTS) has biased composition (polar residues). Basic and acidic residues predominate over residues 214–227 (RHNDRDYRLPRTDS). Composition is skewed to low complexity over residues 230-260 (SAAP…TVQP) and 299-331 (SDKS…TVPV). The span at 420-446 (PMSLTSDASSPRSYVSPRISTPQTNTV) shows a compositional bias: polar residues. A compositionally biased stretch (low complexity) spans 467–486 (GSKQGSSAQTASQQSSAADK). Over residues 511-532 (PNHNSSTCASSTSAPQNSSARS) the composition is skewed to polar residues. Residues 599–625 (QATLREQRILFLRQQIKELEKLKNQNS) adopt a coiled-coil conformation.

It localises to the nucleus. Functionally, acts as a linker between gene transcription and histone H2B monoubiquitination at 'Lys-120' (H2BK120ub1). Positive regulator of amino acid starvation-induced autophagy. Positively regulates MTOR activity. May negatively regulate the ubiquitin proteasome pathway. The protein is WW domain-containing adapter protein with coiled-coil (wac) of Xenopus tropicalis (Western clawed frog).